The primary structure comprises 235 residues: Eukaryotic translation initiation factor 4E-1 (235 aa).

The segment covering 16 to 25 (VNKHRGVRSD) has biased composition (basic and acidic residues). Residues 16-56 (VNKHRGVRSDGEEDEQLEEGEIVGGDADTLSSSSSSRPGTA) are disordered. The span at 26–36 (GEEDEQLEEGE) shows a compositional bias: acidic residues. 2 EIF4G-binding regions span residues 60 to 63 (HPLE) and 70 to 106 (FDTP…NNIH). Residues 78–83 (KQVAWG), Lys-110, and 128–129 (WE) each bind mRNA. An intrachain disulfide couples Cys-133 to Cys-171. The interval 154 to 163 (YTLLAMIGEQ) is EIF4G-binding. Residues 178-183 (RARQEK) and 223-227 (KTLDR) each bind mRNA.

The protein belongs to the eukaryotic initiation factor 4E family. As to quaternary structure, EIF4F is a multi-subunit complex, the composition of which varies with external and internal environmental conditions. It is composed of at least EIF4A, EIF4E and EIF4G. EIF4E is also known to interact with other partners. In higher plants two isoforms of EIF4F have been identified, named isoform EIF4F and isoform EIF(iso)4F. Isoform EIF4F has subunits p220 and p26, whereas isoform EIF(iso)4F has subunits p82 and p28. In terms of assembly, (Microbial infection) Interacts with potyvirus viral genome-linked protein (VPg); this interaction is possible in susceptible hosts but impaired in resistant plants. Post-translationally, according to the redox status, the Cys-133-Cys-171 disulfide bridge may have a role in regulating protein function by affecting its ability to bind capped mRNA.

It localises to the nucleus. Its subcellular location is the cytoplasm. In terms of biological role, component of the protein complex eIF4F, which is involved in the recognition of the mRNA cap, ATP-dependent unwinding of 5'-terminal secondary structure and recruitment of mRNA to the ribosome. Recognizes and binds the 7-methylguanosine-containing mRNA cap during an early step in the initiation of protein synthesis and facilitates ribosome binding by inducing the unwinding of the mRNAs secondary structures. Key component of recessive resistance to potyviruses. Its function is as follows. (Microbial infection) Susceptibility host factor required for viral infection by recruiting viral RNAs to the host ribosomal complex via an interaction with viral genome-linked protein (VPg). The chain is Eukaryotic translation initiation factor 4E-1 from Lactuca sativa (Garden lettuce).